The sequence spans 182 residues: MSLSLLLRGAVRCNAANLVKSARITPLKSYSTLVANVQRKAVVQPLAVAKIVAPVVREISVSAPRMASAGSSHTLLWTVERIVSAGLLAVIPAAFIAPSQVLDALMAISVVIHTHWGVEAMVVDYMRPSVVGNVLPKVAHIALIIISVATLGGLFYFIQNDVGLANGIKRFWAIKGKDAEKA.

At Met-1–Ser-71 the chain is on the mitochondrial matrix side. A helical transmembrane segment spans residues Ser-72 to Ile-96. Residues Ala-97–Val-101 lie on the Mitochondrial intermembrane side of the membrane. A helical transmembrane segment spans residues Leu-102 to Val-122. A heme-binding site is contributed by His-113. Topologically, residues Val-123–Leu-135 are mitochondrial matrix. Position 125 (Tyr-125) interacts with a ubiquinone. A helical transmembrane segment spans residues Pro-136 to Phe-157. Over Ile-158–Ala-182 the chain is Mitochondrial intermembrane.

Belongs to the CybS family. In terms of assembly, forms part of complex II containing four subunits: a flavoprotein (FP), an iron-sulfur protein (IP) and a cytochrome b composed of a large and a small subunit.

The protein resides in the mitochondrion inner membrane. The protein operates within carbohydrate metabolism; tricarboxylic acid cycle. Its function is as follows. Membrane-anchoring subunit of succinate dehydrogenase (SDH) that is involved in complex II of the mitochondrial electron transport chain and is responsible for transferring electrons from succinate to ubiquinone (coenzyme Q). The sequence is that of Succinate dehydrogenase [ubiquinone] cytochrome b small subunit, mitochondrial from Drosophila melanogaster (Fruit fly).